The chain runs to 196 residues: DnaA initiator-associating protein DiaA (196 aa).

The region spanning 34–196 (LVQSLLNGNK…DNTLFPHQDD (163 aa)) is the SIS domain.

It belongs to the SIS family. DiaA subfamily. In terms of assembly, homotetramer; dimer of dimers.

Its function is as follows. Required for the timely initiation of chromosomal replication via direct interactions with the DnaA initiator protein. The polypeptide is DnaA initiator-associating protein DiaA (Yersinia enterocolitica serotype O:8 / biotype 1B (strain NCTC 13174 / 8081)).